A 184-amino-acid polypeptide reads, in one-letter code: ATP-dependent 6-phosphofructokinase (184 aa).

Positions 1–184 (GGDGSLTGAN…TRTTVLGHIQ (184 aa)) are N-terminal catalytic PFK domain 1. 2–5 (GDGS) provides a ligand contact to ATP. D3 is a Mg(2+) binding site. Residues 48-50 (SID), R85, 92-94 (MGR), E148, R176, and 182-184 (HIQ) contribute to the substrate site. D50 serves as the catalytic Proton acceptor.

It belongs to the phosphofructokinase type A (PFKA) family. ATP-dependent PFK group I subfamily. Eukaryotic two domain clade 'E' sub-subfamily. Homotetramer. Mg(2+) serves as cofactor.

Its subcellular location is the cytoplasm. The enzyme catalyses beta-D-fructose 6-phosphate + ATP = beta-D-fructose 1,6-bisphosphate + ADP + H(+). The protein operates within carbohydrate degradation; glycolysis; D-glyceraldehyde 3-phosphate and glycerone phosphate from D-glucose: step 3/4. Its activity is regulated as follows. Allosterically activated by ADP, AMP, or fructose 2,6-bisphosphate, and allosterically inhibited by ATP or citrate. Functionally, catalyzes the phosphorylation of D-fructose 6-phosphate to fructose 1,6-bisphosphate by ATP, the first committing step of glycolysis. This is ATP-dependent 6-phosphofructokinase (PFK) from Calanus finmarchicus (Calanus tonsus).